A 730-amino-acid polypeptide reads, in one-letter code: Semaphorin-1A (730 aa).

The N-terminal stretch at 1-20 is a signal peptide; sequence MRAALVAVAALLWVALHAAA. Residues 21–630 are Extracellular-facing; it reads WVNDVSPKMY…LPIYTAETLT (610 aa). Positions 28 to 490 constitute a Sema domain; it reads KMYVQFGEER…SDDEILAIKL (463 aa). N-linked (GlcNAc...) asparagine glycosylation is found at Asn44 and Asn71. 2 disulfide bridges follow: Cys97-Cys107 and Cys125-Cys134. 2 N-linked (GlcNAc...) asparagine glycosylation sites follow: Asn163 and Asn267. Cystine bridges form between Cys244-Cys358 and Cys268-Cys317. N-linked (GlcNAc...) asparagine glycosylation is present at Asn360. 2 disulfide bridges follow: Cys493-Cys512 and Cys504-Cys521. The N-linked (GlcNAc...) asparagine glycan is linked to Asn539. The helical transmembrane segment at 631–651 threads the bilayer; sequence IAIVTSCLGALVVGFISGFLF. Residues 652–730 lie on the Cytoplasmic side of the membrane; that stretch reads SRRCRGEDYT…PIQKVKKTYI (79 aa). Residues 708–720 show a composition bias toward low complexity; sequence ANGKNANSSAENK. The segment at 708 to 730 is disordered; it reads ANGKNANSSAENKPIQKVKKTYI.

It belongs to the semaphorin family. Dynamically expressed on a subset of axon pathways in the developing CNS and on circumferential bands of epithelial cells in developing limb buds.

The protein localises to the membrane. Its function is as follows. Plays a role in growth cones guidance. The sequence is that of Semaphorin-1A (SEMA-1A) from Schistocerca americana (American grasshopper).